Consider the following 108-residue polypeptide: UPF0060 membrane protein SH0717 (108 aa).

4 helical membrane passes run 5–25, 31–51, 60–80, and 86–106; these read IFIF…IWLW, SSWL…IATF, VYAA…YIVD, and KYDL…ILPS.

This sequence belongs to the UPF0060 family.

It localises to the cell membrane. This chain is UPF0060 membrane protein SH0717, found in Staphylococcus haemolyticus (strain JCSC1435).